A 752-amino-acid polypeptide reads, in one-letter code: MSDMAERLALHEFTENAYLNYSMYVIMDRALPFIGDGLKPVQRRIVYAMSELGLNASAKFKKSARTVGDVLGKYHPHGDSACYEAMVLMAQPFSYRYPLVDGQGNWGAPDDPKSFAAMRYTESRLSKYSELLLSELGQGTADWVPNFDGTLQEPKMLPARLPNILLNGTTGIAVGMATDIPPHNLREVAQAAIALIDQPKTTLDQLLDIVQGPDYPTEAEIITSRAEIRKIYENGRGSVRMRAVWKKEDGAVVISALPHQVSGARVLEQIAAQMRNKKLPMVDDLRDESDHENPTRLVIVPRSNRVDMDQVMNHLFATTDLEKSYRINLNMIGLDGRPAVKNLLEILSEWLVFRRDTVRRRLNYRLEKVLKRLHILEGLLVAFLNIDEVIEIIRNEDEPKPALMSRFGLTETQAEAILELKLRHLAKLEEMKIRGEQSELEKERDQLQGILASERKMNNLLKKELQADAQAYGDDRRSPLQEREEAKAMSEHDMLPSEPVTIVLSQMGWVRSAKGHDIDAPGLNYKAGDSFKAAVKGKSNQPVVFVDSTGRSYAIDPITLPSARGQGEPLTGKLTLPPGATVDHMLMESDDQKLLMASDAGYGFVCTFNDLVARNRAGKALITLPENAHVMPPVVIEDASDMLLAITQAGRMLMFPVSDLPQLSKGKGNKIINIPSAEAARGEDGLAQLYVLPPQSTLTIHVGKRKIKLRPEELQKVTGERGRRGTLMRGLQRIDRVEIDSPRRASSGDSEE.

Positions 31–494 constitute a Topo IIA-type catalytic domain; sequence LPFIGDGLKP…EAKAMSEHDM (464 aa). The active-site O-(5'-phospho-DNA)-tyrosine intermediate is tyrosine 120. 2 disordered regions span residues 472–492 and 718–752; these read YGDDRRSPLQEREEAKAMSEH and TGERGRRGTLMRGLQRIDRVEIDSPRRASSGDSEE. Composition is skewed to basic and acidic residues over residues 473–492 and 732–743; these read GDDRRSPLQEREEAKAMSEH and QRIDRVEIDSPR.

The protein belongs to the type II topoisomerase GyrA/ParC subunit family. ParC type 1 subfamily. Heterotetramer composed of ParC and ParE.

Its subcellular location is the cell membrane. It carries out the reaction ATP-dependent breakage, passage and rejoining of double-stranded DNA.. Topoisomerase IV is essential for chromosome segregation. It relaxes supercoiled DNA. Performs the decatenation events required during the replication of a circular DNA molecule. The polypeptide is DNA topoisomerase 4 subunit A (Escherichia coli O157:H7).